Reading from the N-terminus, the 266-residue chain is uncharacterized protein (266 aa).

The TIR domain maps to 112–261; sequence LEKKIFISHS…KKWERIKAKF (150 aa). Residue Glu192 is part of the active site.

The catalysed reaction is NAD(+) + H2O = ADP-D-ribose + nicotinamide + H(+). This is an uncharacterized protein from Bacillus subtilis (strain 168).